Consider the following 213-residue polypeptide: ATP phosphoribosyltransferase (213 aa).

Belongs to the ATP phosphoribosyltransferase family. Short subfamily. As to quaternary structure, heteromultimer composed of HisG and HisZ subunits.

The protein localises to the cytoplasm. It catalyses the reaction 1-(5-phospho-beta-D-ribosyl)-ATP + diphosphate = 5-phospho-alpha-D-ribose 1-diphosphate + ATP. The protein operates within amino-acid biosynthesis; L-histidine biosynthesis; L-histidine from 5-phospho-alpha-D-ribose 1-diphosphate: step 1/9. In terms of biological role, catalyzes the condensation of ATP and 5-phosphoribose 1-diphosphate to form N'-(5'-phosphoribosyl)-ATP (PR-ATP). Has a crucial role in the pathway because the rate of histidine biosynthesis seems to be controlled primarily by regulation of HisG enzymatic activity. In Listeria monocytogenes serotype 4b (strain F2365), this protein is ATP phosphoribosyltransferase.